Reading from the N-terminus, the 226-residue chain is MDWGTLQTILGGVNKHSTSIGKIWLTVLFIFRIMILVVAAKEVWGDEQADFVCNTLQPGCKNVCYDHYFPISHIRLWALQLIFVSTPALLVAMHVAYRRHEKKRKFIKGEIKSEFKDIEEIKTQKVRIEGSLWWTYTSSIFFRVIFEAAFMYVFYVMYDGFSMQRLVKCNAWPCPNTVDCFVSRPTEKTVFTVFMIAVSGICILLNVTELCYLLIRYCSGKSKKPV.

The stretch at 2 to 13 (DWGTLQTILGGV) is an intramembrane region. At 14 to 20 (NKHSTSI) the chain is on the cytoplasmic side. A helical membrane pass occupies residues 21–40 (GKIWLTVLFIFRIMILVVAA). The Extracellular segment spans residues 41–73 (KEVWGDEQADFVCNTLQPGCKNVCYDHYFPISH). Residues E42, G45, and E47 each coordinate Ca(2+). 3 disulfides stabilise this stretch: C53/C180, C60/C174, and C64/C169. A helical membrane pass occupies residues 74-94 (IRLWALQLIFVSTPALLVAMH). The Cytoplasmic portion of the chain corresponds to 95–135 (VAYRRHEKKRKFIKGEIKSEFKDIEEIKTQKVRIEGSLWWT). A helical transmembrane segment spans residues 136–156 (YTSSIFFRVIFEAAFMYVFYV). Residues 157-189 (MYDGFSMQRLVKCNAWPCPNTVDCFVSRPTEKT) are Extracellular-facing. The chain crosses the membrane as a helical span at residues 190-210 (VFTVFMIAVSGICILLNVTEL). Residues 211 to 226 (CYLLIRYCSGKSKKPV) are Cytoplasmic-facing.

It belongs to the connexin family. Beta-type (group I) subfamily. A hemichannel or connexon is composed of a hexamer of connexins. A functional gap junction is formed by the apposition of two hemichannels. Forms heteromeric channels with GJB4. Interacts with CNST.

The protein localises to the cell membrane. It is found in the cell junction. Its subcellular location is the gap junction. Its function is as follows. Structural component of gap junctions. Gap junctions are dodecameric channels that connect the cytoplasm of adjoining cells. They are formed by the docking of two hexameric hemichannels, one from each cell membrane. Small molecules and ions diffuse from one cell to a neighboring cell via the central pore. This is Gap junction beta-2 protein (GJB2) from Gorilla gorilla gorilla (Western lowland gorilla).